A 296-amino-acid chain; its full sequence is Probable AP endonuclease (296 aa).

A disulfide bond links cysteine 16 and cysteine 20. Zn(2+)-binding residues include histidine 78, histidine 115, glutamate 142, histidine 182, histidine 218, aspartate 231, histidine 233, and glutamate 271.

This sequence belongs to the AP endonuclease 2 family. It depends on Zn(2+) as a cofactor.

It is found in the host nucleus. Its subcellular location is the host cytoplasm. The protein resides in the virion. In terms of biological role, endonuclease that plays a role in DNA repair. Cleaves phosphodiester bonds on the 5' side of apurinic or apyrimidinic sites (AP sites). In addition to endonuclease activity, the ASFV enzyme has a proofreading 3'-5' exonuclease activity that is considerably more efficient in the elimination of a mismatch than in that of a correctly paired base. Displays 3'-phosphatase and 3'-repair diesterase activities. The single nucleotide gaps generated by the AP endonuclease are filled by the viral AP endonuclease and DNA ligase. The polypeptide is Probable AP endonuclease (Ornithodoros (relapsing fever ticks)).